A 226-amino-acid chain; its full sequence is Cytidylate kinase (226 aa).

Residue Gly9 to Thr17 coordinates ATP.

This sequence belongs to the cytidylate kinase family. Type 1 subfamily.

It is found in the cytoplasm. It carries out the reaction CMP + ATP = CDP + ADP. The enzyme catalyses dCMP + ATP = dCDP + ADP. The polypeptide is Cytidylate kinase (Clostridium tetani (strain Massachusetts / E88)).